The primary structure comprises 81 residues: Large ribosomal subunit protein bL31B (81 aa).

Belongs to the bacterial ribosomal protein bL31 family. Type B subfamily. As to quaternary structure, part of the 50S ribosomal subunit.

This Lactobacillus helveticus (strain DPC 4571) protein is Large ribosomal subunit protein bL31B.